We begin with the raw amino-acid sequence, 200 residues long: Glycerol-3-phosphate acyltransferase (200 aa).

The next 4 helical transmembrane spans lie at 1–21 (MITV…FAVV), 84–104 (VIAG…FLAF), 116–136 (ILLG…MVVA), and 159–179 (FLLE…LLIL).

Belongs to the PlsY family. In terms of assembly, probably interacts with PlsX.

The protein resides in the cell inner membrane. It carries out the reaction an acyl phosphate + sn-glycerol 3-phosphate = a 1-acyl-sn-glycero-3-phosphate + phosphate. The protein operates within lipid metabolism; phospholipid metabolism. Its function is as follows. Catalyzes the transfer of an acyl group from acyl-phosphate (acyl-PO(4)) to glycerol-3-phosphate (G3P) to form lysophosphatidic acid (LPA). This enzyme utilizes acyl-phosphate as fatty acyl donor, but not acyl-CoA or acyl-ACP. The sequence is that of Glycerol-3-phosphate acyltransferase from Nitrosomonas europaea (strain ATCC 19718 / CIP 103999 / KCTC 2705 / NBRC 14298).